A 406-amino-acid polypeptide reads, in one-letter code: Cysteine desulfurase (406 aa).

Lysine 226 is subject to N6-(pyridoxal phosphate)lysine. Cysteine 364 functions as the Cysteine persulfide intermediate in the catalytic mechanism.

Belongs to the class-V pyridoxal-phosphate-dependent aminotransferase family. Csd subfamily. Homodimer. Interacts with SufE and the SufBCD complex composed of SufB, SufC and SufD. The interaction with SufE is required to mediate the direct transfer of the sulfur atom from the S-sulfanylcysteine. Pyridoxal 5'-phosphate serves as cofactor.

Its subcellular location is the cytoplasm. It carries out the reaction (sulfur carrier)-H + L-cysteine = (sulfur carrier)-SH + L-alanine. The enzyme catalyses L-selenocysteine + AH2 = hydrogenselenide + L-alanine + A + H(+). Its pathway is cofactor biosynthesis; iron-sulfur cluster biosynthesis. Cysteine desulfurases mobilize the sulfur from L-cysteine to yield L-alanine, an essential step in sulfur metabolism for biosynthesis of a variety of sulfur-containing biomolecules. Component of the suf operon, which is activated and required under specific conditions such as oxidative stress and iron limitation. Acts as a potent selenocysteine lyase in vitro, that mobilizes selenium from L-selenocysteine. Selenocysteine lyase activity is however unsure in vivo. The chain is Cysteine desulfurase from Yersinia pestis bv. Antiqua (strain Antiqua).